A 392-amino-acid chain; its full sequence is Acyl-CoA dehydrogenase IpdE1 (392 aa).

FAD-binding positions include 126-129 (QGYS) and S171. The active-site Proton acceptor is E254. Residue 371 to 373 (SNE) participates in FAD binding.

This sequence belongs to the acyl-CoA dehydrogenase family. In terms of assembly, heterotetramer composed of 2 IpdE1 subunits and 2 IpdE2 subunits. FAD serves as cofactor.

The catalysed reaction is 3-[(3aS,4S,5R,7aS)-5-hydroxy-7a-methyl-1-oxo-octahydro-1H-inden-4-yl]propanoyl-CoA + A = (2E)-3-[(3aS,4S,5R,7aS)-5-hydroxy-7a-methyl-1-oxo-octahydro-1H-inden-4-yl]prop-2-enoyl-CoA + AH2. It participates in steroid metabolism; cholesterol degradation. Involved in cholesterol degradation. Catalyzes the dehydrogenation of 5OH-HIP-CoA to 5OH-HIPE-CoA. This chain is Acyl-CoA dehydrogenase IpdE1, found in Mycolicibacterium smegmatis (strain ATCC 700084 / mc(2)155) (Mycobacterium smegmatis).